A 352-amino-acid polypeptide reads, in one-letter code: Ribosome biogenesis protein BRX1 homolog (352 aa).

The interval 1-55 (MGKFSKIKKVQEEESAHQKMEWEAAGAKDSSSDDSSDESDNDDQPKQATEETRKR) is disordered. Residues 9-22 (KVQEEESAHQKMEW) show a composition bias toward basic and acidic residues. Residues 32–42 (SDDSSDESDND) show a composition bias toward acidic residues. Residues 43–55 (DQPKQATEETRKR) are compositionally biased toward basic and acidic residues. The region spanning 63-253 (ERVLVLCSRG…MVRLFAGSFE (191 aa)) is the Brix domain.

The protein belongs to the BRX1 family.

The protein localises to the nucleus. The protein resides in the nucleolus. Required for biogenesis of the 60S ribosomal subunit. In Caenorhabditis elegans, this protein is Ribosome biogenesis protein BRX1 homolog.